The sequence spans 449 residues: Tubulin beta chain (449 aa).

8 residues coordinate GTP: Q11, E69, S138, G142, T143, G144, N204, and N226. E69 contributes to the Mg(2+) binding site.

Belongs to the tubulin family. In terms of assembly, dimer of alpha and beta chains. A typical microtubule is a hollow water-filled tube with an outer diameter of 25 nm and an inner diameter of 15 nM. Alpha-beta heterodimers associate head-to-tail to form protofilaments running lengthwise along the microtubule wall with the beta-tubulin subunit facing the microtubule plus end conferring a structural polarity. Microtubules usually have 13 protofilaments but different protofilament numbers can be found in some organisms and specialized cells. Requires Mg(2+) as cofactor.

The protein localises to the cytoplasm. Its subcellular location is the cytoskeleton. Its function is as follows. Tubulin is the major constituent of microtubules, a cylinder consisting of laterally associated linear protofilaments composed of alpha- and beta-tubulin heterodimers. Microtubules grow by the addition of GTP-tubulin dimers to the microtubule end, where a stabilizing cap forms. Below the cap, tubulin dimers are in GDP-bound state, owing to GTPase activity of alpha-tubulin. The sequence is that of Tubulin beta chain (TUB2) from Candida albicans (Yeast).